Reading from the N-terminus, the 300-residue chain is Inosose dehydratase (300 aa).

This sequence belongs to the IolE/MocC family. Glutathione serves as cofactor. The cofactor is Co(2+). Requires Mn(2+) as cofactor.

The enzyme catalyses scyllo-inosose = 3D-3,5/4-trihydroxycyclohexane-1,2-dione + H2O. It participates in polyol metabolism; myo-inositol degradation into acetyl-CoA; acetyl-CoA from myo-inositol: step 2/7. Catalyzes the dehydration of inosose (2-keto-myo-inositol, 2KMI or 2,4,6/3,5-pentahydroxycyclohexanone) to 3D-(3,5/4)-trihydroxycyclohexane-1,2-dione (D-2,3-diketo-4-deoxy-epi-inositol). The chain is Inosose dehydratase from Bacillus licheniformis (strain ATCC 14580 / DSM 13 / JCM 2505 / CCUG 7422 / NBRC 12200 / NCIMB 9375 / NCTC 10341 / NRRL NRS-1264 / Gibson 46).